Reading from the N-terminus, the 91-residue chain is Small ribosomal subunit protein bS16 (91 aa).

Belongs to the bacterial ribosomal protein bS16 family. Part of the 30S ribosomal subunit.

Functionally, binds to the lower part of the body of the 30S subunit, where it stabilizes two of its domains. This Thermus thermophilus protein is Small ribosomal subunit protein bS16.